A 1099-amino-acid chain; its full sequence is Carbamoyl phosphate synthase large chain (1099 aa).

Residues 1 to 402 (MPKREDIKRI…ALGKALRSLE (402 aa)) form a carboxyphosphate synthetic domain region. Residues Arg129, Arg169, Gly175, Gly176, Glu208, Val210, Glu215, Gly241, Ile242, His243, Gln285, and Glu299 each contribute to the ATP site. Residues 133-328 (KETMEKAGLE…IAKVAALLAV (196 aa)) enclose the ATP-grasp 1 domain. Gln285, Glu299, and Asn301 together coordinate Mg(2+). Mn(2+)-binding residues include Gln285, Glu299, and Asn301. Residues 403–541 (LDAAPKLDLE…STYNGVENEA (139 aa)) are oligomerization domain. The carbamoyl phosphate synthetic domain stretch occupies residues 542-944 (VPSDREKIMI…AFAKAQIAAG (403 aa)). The ATP-grasp 2 domain maps to 666–857 (AKLLKQIGLK…VARIAAKIMV (192 aa)). ATP contacts are provided by Arg702, Lys741, Leu743, Glu748, Gly773, Val774, His775, Ser776, Gln816, and Glu828. Mg(2+) contacts are provided by Gln816, Glu828, and Asn830. Mn(2+) is bound by residues Gln816, Glu828, and Asn830. The MGS-like domain occupies 945–1099 (NPLPTTGAIL…VRRLTDTWKM (155 aa)). Residues 945-1099 (NPLPTTGAIL…VRRLTDTWKM (155 aa)) are allosteric domain.

It belongs to the CarB family. Composed of two chains; the small (or glutamine) chain promotes the hydrolysis of glutamine to ammonia, which is used by the large (or ammonia) chain to synthesize carbamoyl phosphate. Tetramer of heterodimers (alpha,beta)4. The cofactor is Mg(2+). Mn(2+) serves as cofactor.

The catalysed reaction is hydrogencarbonate + L-glutamine + 2 ATP + H2O = carbamoyl phosphate + L-glutamate + 2 ADP + phosphate + 2 H(+). It carries out the reaction hydrogencarbonate + NH4(+) + 2 ATP = carbamoyl phosphate + 2 ADP + phosphate + 2 H(+). Its pathway is amino-acid biosynthesis; L-arginine biosynthesis; carbamoyl phosphate from bicarbonate: step 1/1. It functions in the pathway pyrimidine metabolism; UMP biosynthesis via de novo pathway; (S)-dihydroorotate from bicarbonate: step 1/3. Functionally, large subunit of the glutamine-dependent carbamoyl phosphate synthetase (CPSase). CPSase catalyzes the formation of carbamoyl phosphate from the ammonia moiety of glutamine, carbonate, and phosphate donated by ATP, constituting the first step of 2 biosynthetic pathways, one leading to arginine and/or urea and the other to pyrimidine nucleotides. The large subunit (synthetase) binds the substrates ammonia (free or transferred from glutamine from the small subunit), hydrogencarbonate and ATP and carries out an ATP-coupled ligase reaction, activating hydrogencarbonate by forming carboxy phosphate which reacts with ammonia to form carbamoyl phosphate. This chain is Carbamoyl phosphate synthase large chain, found in Thermotoga maritima (strain ATCC 43589 / DSM 3109 / JCM 10099 / NBRC 100826 / MSB8).